Here is a 484-residue protein sequence, read N- to C-terminus: Glutamate--tRNA ligase (484 aa).

The 'HIGH' region signature appears at 11 to 21 (PSPTGYLHIGN). The 'KMSKS' region signature appears at 252-256 (KLSKR). Lysine 255 is an ATP binding site.

Belongs to the class-I aminoacyl-tRNA synthetase family. Glutamate--tRNA ligase type 1 subfamily. As to quaternary structure, monomer.

The protein resides in the cytoplasm. It catalyses the reaction tRNA(Glu) + L-glutamate + ATP = L-glutamyl-tRNA(Glu) + AMP + diphosphate. Its function is as follows. Catalyzes the attachment of glutamate to tRNA(Glu) in a two-step reaction: glutamate is first activated by ATP to form Glu-AMP and then transferred to the acceptor end of tRNA(Glu). In Staphylococcus aureus (strain bovine RF122 / ET3-1), this protein is Glutamate--tRNA ligase.